The sequence spans 1357 residues: DNA-directed RNA polymerase subunit beta (1357 aa).

The protein belongs to the RNA polymerase beta chain family. In terms of assembly, the RNAP catalytic core consists of 2 alpha, 1 beta, 1 beta' and 1 omega subunit. When a sigma factor is associated with the core the holoenzyme is formed, which can initiate transcription.

It catalyses the reaction RNA(n) + a ribonucleoside 5'-triphosphate = RNA(n+1) + diphosphate. Functionally, DNA-dependent RNA polymerase catalyzes the transcription of DNA into RNA using the four ribonucleoside triphosphates as substrates. In Pseudomonas syringae pv. syringae (strain B728a), this protein is DNA-directed RNA polymerase subunit beta.